The primary structure comprises 92 residues: DNA-directed RNA polymerase subunit Rpo5 (92 aa).

The protein belongs to the archaeal Rpo5/eukaryotic RPB5 RNA polymerase subunit family. As to quaternary structure, part of the RNA polymerase complex.

The protein localises to the cytoplasm. It catalyses the reaction RNA(n) + a ribonucleoside 5'-triphosphate = RNA(n+1) + diphosphate. Its function is as follows. DNA-dependent RNA polymerase (RNAP) catalyzes the transcription of DNA into RNA using the four ribonucleoside triphosphates as substrates. This Methanopyrus kandleri (strain AV19 / DSM 6324 / JCM 9639 / NBRC 100938) protein is DNA-directed RNA polymerase subunit Rpo5.